Here is a 445-residue protein sequence, read N- to C-terminus: MAERNEQILTPSQLNALARDLLEGSFPLVWVEAELSSVTRPSSGHLYFTLKDARAQIRCAMFKPKSTWLKFQPREGLRVLARGRLTLYEARGDYQLVLDHMEEAGEGALRRAFDALRARLAAEGLFDAERKQSLPAHVQRLAVITSPSGAAVRDVLSVLARRFPLLEVDLLPSLVQGDSAAAQITSLLQRADASGRYDVILITRGGGSLEDLWAFNDERLARAIAAAQTPVVSAVGHETDFSLSDFVADVRAPTPSVAAELLVPDQRELVARVRRAQARMTQLQQHALGNAMQRADRLALRLRAHSPQARLQLLHRRQEEAGRQLGARMTQVLERLQARVQRGHAQVQSHNPQRHLAGLQQRLRALHPQAAMQRRLQHDQLQLRSIARSLEAVNPLATVARGYAIVTRPADGSVVRSAAEVAAGERLRAQLADGSIEVRVEPGER.

This sequence belongs to the XseA family. In terms of assembly, heterooligomer composed of large and small subunits.

Its subcellular location is the cytoplasm. It catalyses the reaction Exonucleolytic cleavage in either 5'- to 3'- or 3'- to 5'-direction to yield nucleoside 5'-phosphates.. In terms of biological role, bidirectionally degrades single-stranded DNA into large acid-insoluble oligonucleotides, which are then degraded further into small acid-soluble oligonucleotides. This Xanthomonas oryzae pv. oryzae (strain KACC10331 / KXO85) protein is Exodeoxyribonuclease 7 large subunit.